Consider the following 49-residue polypeptide: MRIHVVLGNDETGERIYLTSKNRRNTPDRLELKKYSPKLRKVVTFKEIK.

This sequence belongs to the bacterial ribosomal protein bL33 family.

This chain is Large ribosomal subunit protein bL33, found in Leuconostoc citreum (strain KM20).